We begin with the raw amino-acid sequence, 288 residues long: Beta-lactamase CARB-4 (288 aa).

The N-terminal stretch at 1–17 (MKLLLVFSLLIPSMVFA) is a signal peptide. Serine 65 functions as the Acyl-ester intermediate in the catalytic mechanism. Cysteines 72 and 118 form a disulfide. A substrate-binding site is contributed by 229-231 (RSG).

Belongs to the class-A beta-lactamase family.

It catalyses the reaction a beta-lactam + H2O = a substituted beta-amino acid. Inhibited by clavulanic acid and sulbactam. Hydrolyzes carbenicillin. Methicillin and oxacillin are weakly hydrolyzed. In Pseudomonas aeruginosa, this protein is Beta-lactamase CARB-4 (carB4).